The sequence spans 98 residues: Aspartyl/glutamyl-tRNA(Asn/Gln) amidotransferase subunit C (98 aa).

The protein belongs to the GatC family. In terms of assembly, heterotrimer of A, B and C subunits.

The enzyme catalyses L-glutamyl-tRNA(Gln) + L-glutamine + ATP + H2O = L-glutaminyl-tRNA(Gln) + L-glutamate + ADP + phosphate + H(+). The catalysed reaction is L-aspartyl-tRNA(Asn) + L-glutamine + ATP + H2O = L-asparaginyl-tRNA(Asn) + L-glutamate + ADP + phosphate + 2 H(+). Allows the formation of correctly charged Asn-tRNA(Asn) or Gln-tRNA(Gln) through the transamidation of misacylated Asp-tRNA(Asn) or Glu-tRNA(Gln) in organisms which lack either or both of asparaginyl-tRNA or glutaminyl-tRNA synthetases. The reaction takes place in the presence of glutamine and ATP through an activated phospho-Asp-tRNA(Asn) or phospho-Glu-tRNA(Gln). This chain is Aspartyl/glutamyl-tRNA(Asn/Gln) amidotransferase subunit C, found in Gloeothece citriformis (strain PCC 7424) (Cyanothece sp. (strain PCC 7424)).